The following is a 133-amino-acid chain: Fatty acid-binding protein homolog 1 (133 aa).

Position 1 is an N-acetylmethionine (Met1). Hexadecanoate is bound by residues Arg107 and 127–129 (RTY).

Belongs to the calycin superfamily. Fatty-acid binding protein (FABP) family.

Its function is as follows. Has been implicated in the acquisition, storage, and transport of lipids, and may be important to the organism since it is incapable of synthesizing most of its lipids de novo. This chain is Fatty acid-binding protein homolog 1 (FABP1), found in Echinococcus granulosus (Hydatid tapeworm).